A 703-amino-acid polypeptide reads, in one-letter code: MEIEASRQQTTVPVSVGGGNFPVGGLSPLSEAIWREKAPTEFVGDVSARLTWQDLTVMVTMGDGETQNVLEGLTGYAEPGSLTALMGPSGSGKSTMLDALASRLAANAFLSGTVLLNGRKTKLSFGTAAYVTQDDNLIGTLTVRETIWYSARVRLPDKMLRSEKRALVERTIIEMGLQDCADTVIGNWHLRGISGGEKRRVSIALEILMRPRLLFLDEPTSGLDSASAFFVTQTLRALSRDGRTVIASIHQPSSEVFELFDRLYLLSGGKTVYFGQASDAYEFFAQAGFPCPALRNPSDHFLRCINSDFDKVRATLKGSMKLRFEASDDPLEKITTAEAIRLLVDYYHTSDYYYTAKAKVEEISQFKGTILDSGGSQASFLLQTYTLTKRSFINMSRDFGYYWLRLLIYILVTVCIGTIYLNVGTSYSAILARGSCASFVFGFVTFMSIGGFPSFVEDMKVFQRERLNGHYGVAAFVIANTLSATPFLIMITFISGTICYFMVGLHPGFTHYLFFVLCLYASVTVVESLMMAIASIVPNFLMGIIIGAGIQGIFMLVSGFFRLPNDIPKPFWRYPMSYISFHFWALQGQYQNDLRGLTFDSQGSAFKIPGEYVLENVFQIDLHRSKWINLSVILSMIIIYRIIFFIMIKTNEDVTPWVRGYIARRRMKQKNGTQNTTVAPDGLTQSPSLRNYIATRTDGARRW.

The region spanning 50 to 293 (LTWQDLTVMV…FAQAGFPCPA (244 aa)) is the ABC transporter domain. Residue 87 to 94 (GPSGSGKS) coordinates ATP. Positions 382 to 594 (LQTYTLTKRS…ALQGQYQNDL (213 aa)) constitute an ABC transmembrane type-2 domain. Asn-394 is a glycosylation site (N-linked (GlcNAc...) asparagine). Transmembrane regions (helical) follow at residues 406–426 (LLIY…VGTS), 436–456 (CASF…PSFV), 485–505 (TPFL…MVGL), 513–533 (LFFV…MMAI), 540–560 (FLMG…VSGF), and 628–648 (INLS…FIMI). Residues Asn-671 and Asn-675 are each glycosylated (N-linked (GlcNAc...) asparagine). Residue Ser-688 is modified to Phosphoserine.

It belongs to the ABC transporter superfamily. ABCG family. Eye pigment precursor importer (TC 3.A.1.204) subfamily. Homodimer. Forms heterodimers with ABCG9, ABCG12 and ABCG14 in epidermal cells. In terms of tissue distribution, expressed in seedlings, roots, stems, leaves, flowers, and siliques, mostly in epidermis, trichomes, vasculatures and developing tissues. Follows an uniparental maternal expression in the seed, thus being the product of a maternally expressed imprinted gene. Accumulates in the phloem. Transcripts seem to be transported from shoots to roots.

It is found in the cell membrane. Its function is as follows. Required for the cuticle, root suberin and pollen coat development by controlling cutin and maybe wax transport to the extracellular matrix. Involved in developmental plasticity and stress responses. Together with ABCG9 and ABCG14, required for vascular development by regulating lipid/sterol homeostasis. May be a transporter of lignin precursors during tracheary element differentiation. This chain is ABC transporter G family member 11, found in Arabidopsis thaliana (Mouse-ear cress).